Consider the following 88-residue polypeptide: Large ribosomal subunit protein bL31B (88 aa).

Belongs to the bacterial ribosomal protein bL31 family. Type B subfamily. Part of the 50S ribosomal subunit.

The chain is Large ribosomal subunit protein bL31B from Glaesserella parasuis serovar 5 (strain SH0165) (Haemophilus parasuis).